Consider the following 201-residue polypeptide: Retinol-binding protein 4 (201 aa).

A signal peptide spans Met1–Ala18. Cystine bridges form between Cys22/Cys178, Cys88/Cys192, and Cys138/Cys147. A substrate-binding site is contributed by Gln116. Residue Arg139 is modified to Omega-N-methylarginine.

This sequence belongs to the calycin superfamily. Lipocalin family. Interacts with TTR. Interaction with TTR prevents its loss by filtration through the kidney glomeruli. Interacts with STRA6.

The protein resides in the secreted. In terms of biological role, retinol-binding protein that mediates retinol transport in blood plasma. Delivers retinol from the liver stores to the peripheral tissues. Transfers the bound all-trans retinol to STRA6, that then facilitates retinol transport across the cell membrane. The sequence is that of Retinol-binding protein 4 (Rbp4) from Mus musculus (Mouse).